The sequence spans 194 residues: Adenine phosphoribosyltransferase (194 aa).

Belongs to the purine/pyrimidine phosphoribosyltransferase family. Homodimer.

It localises to the cytoplasm. The catalysed reaction is AMP + diphosphate = 5-phospho-alpha-D-ribose 1-diphosphate + adenine. It functions in the pathway purine metabolism; AMP biosynthesis via salvage pathway; AMP from adenine: step 1/1. Catalyzes a salvage reaction resulting in the formation of AMP, that is energically less costly than de novo synthesis. The sequence is that of Adenine phosphoribosyltransferase from Albidiferax ferrireducens (strain ATCC BAA-621 / DSM 15236 / T118) (Rhodoferax ferrireducens).